We begin with the raw amino-acid sequence, 147 residues long: Large ribosomal subunit protein bL9 (147 aa).

This sequence belongs to the bacterial ribosomal protein bL9 family.

Its function is as follows. Binds to the 23S rRNA. This chain is Large ribosomal subunit protein bL9, found in Geobacter sp. (strain M21).